A 288-amino-acid chain; its full sequence is Small ribosomal subunit protein uS15m (288 aa).

The transit peptide at 1-50 directs the protein to the mitochondrion; it reads MRLFEGAFQPWKLASTNLMQQCLLLNKKSQFHTTCILQGLKKQKANQRRK.

Belongs to the universal ribosomal protein uS15 family. Component of the mitochondrial small ribosomal subunit (mt-SSU). Mature yeast 74S mitochondrial ribosomes consist of a small (37S) and a large (54S) subunit. The 37S small subunit contains a 15S ribosomal RNA (15S mt-rRNA) and at least 32 different proteins. The 54S large subunit contains a 21S rRNA (21S mt-rRNA) and at least 45 different proteins.

It localises to the mitochondrion. Component of the mitochondrial ribosome (mitoribosome), a dedicated translation machinery responsible for the synthesis of mitochondrial genome-encoded proteins, including at least some of the essential transmembrane subunits of the mitochondrial respiratory chain. The mitoribosomes are attached to the mitochondrial inner membrane and translation products are cotranslationally integrated into the membrane. The sequence is that of Small ribosomal subunit protein uS15m (mrps28) from Schizosaccharomyces pombe (strain 972 / ATCC 24843) (Fission yeast).